We begin with the raw amino-acid sequence, 301 residues long: uncharacterized protein (301 aa).

Residues glutamate 146, glutamate 148, and aspartate 177 each contribute to the a divalent metal cation site.

This sequence belongs to the FAH family.

This is an uncharacterized protein from Staphylococcus saprophyticus subsp. saprophyticus (strain ATCC 15305 / DSM 20229 / NCIMB 8711 / NCTC 7292 / S-41).